Here is a 49-residue protein sequence, read N- to C-terminus: TSCNAATGRSPGCFCNNDNNCRDTCCPRSDTEKKCTGGPDPCPPRQWPD.

Positions 28–49 are disordered; sequence RSDTEKKCTGGPDPCPPRQWPD. Positions 40–49 are enriched in pro residues; the sequence is DPCPPRQWPD.

Post-translationally, contains 4 disulfide bonds. As to expression, expressed by the venom duct.

The protein resides in the secreted. Acts as a neurotoxin by inhibiting an ion channel. The chain is Turripeptide OL47 from Iotyrris olangoensis (Sea snail).